Consider the following 258-residue polypeptide: Cytolethal distending toxin subunit A (258 aa).

The N-terminal stretch at 1-21 (MANKRTPIFIAGILIPILLNG) is a signal peptide. A lipid anchor (N-palmitoyl cysteine) is attached at C22. Residue C22 is the site of S-diacylglycerol cysteine attachment. A disordered region spans residues 40 to 71 (VEGGPTVPSPDEPGLPLPGPGPALPTNGAIPI). Over residues 46 to 62 (VPSPDEPGLPLPGPGPA) the composition is skewed to pro residues. The mediates binding to target cells stretch occupies residues 93-104 (WSRGAGSSLWAY). The 99-residue stretch at 125–223 (RPNTIQFRNV…EKNFEFMWSI (99 aa)) folds into the Ricin B-type lectin domain. The interval 236-258 (KPEIRPFPPQPIEPDEHSTGGEQ) is disordered. The segment covering 249–258 (PDEHSTGGEQ) has biased composition (basic and acidic residues).

As to quaternary structure, heterotrimer of 3 subunits, CdtA, CdtB and CdtC.

It is found in the cell outer membrane. In terms of biological role, CDTs are cytotoxins which induce host cell distension, growth arrest in G2/M phase, nucleus swelling, and chromatin fragmentation in HeLa cells. CdtA, along with CdtC, probably forms a heterodimeric subunit required for the delivery of CdtB. The polypeptide is Cytolethal distending toxin subunit A (cdtA) (Escherichia coli).